Reading from the N-terminus, the 68-residue chain is Large ribosomal subunit protein eL24 (68 aa).

Cysteine 7, cysteine 10, cysteine 33, and cysteine 37 together coordinate Zn(2+). A C4-type zinc finger spans residues 7–37 (CDFCGRIIEPGTGKMFVKNDGTILWFCSSKC).

This sequence belongs to the eukaryotic ribosomal protein eL24 family. In terms of assembly, part of the 50S ribosomal subunit. Forms a cluster with proteins L3 and L14. Zn(2+) serves as cofactor.

Functionally, binds to the 23S rRNA. This is Large ribosomal subunit protein eL24 from Methanopyrus kandleri (strain AV19 / DSM 6324 / JCM 9639 / NBRC 100938).